Reading from the N-terminus, the 337-residue chain is RAD51-associated protein 1 (337 aa).

Disordered stretches follow at residues 1–69 (MVRP…PPKK) and 88–337 (LSVK…SQVR). Residues S19 and S23 each carry the phosphoserine modification. Residues 28-38 (ISSSTPVNKSK) show a composition bias toward polar residues. The segment at 32-50 (TPVNKSKTVPKVLKQDKPK) is interaction with DNA. Residues 44–69 (LKQDKPKPNLKNLQKEEVLPTEPPKK) are compositionally biased toward basic and acidic residues. A phosphoserine mark is found at S103 and S107. Over residues 105 to 118 (EKSTDKQGKEKTEN) the composition is skewed to basic and acidic residues. The SIM motif signature appears at 138–143 (LDKITE). Acidic residues predominate over residues 190–205 (SESDPDFDESKESDED). The segment at 225–286 (GEKKERKSKP…PSAESKRPKW (62 aa)) is interaction with DNA. A Glycyl lysine isopeptide (Lys-Gly) (interchain with G-Cter in SUMO; alternate) cross-link involves residue K251. K251 is covalently cross-linked (Glycyl lysine isopeptide (Lys-Gly) (interchain with G-Cter in ubiquitin; alternate)). The WVPP motif motif lies at 286–289 (WVPP). A compositionally biased stretch (low complexity) spans 290–304 (AASGSRNSSSNALAG). Positions 295 to 334 (RNSSSNALAGTPAKSPSQSLRLGLSRLAPVKRLHPSATSS) are interaction with RAD51. The residue at position 309 (S309) is a Phosphoserine.

Monomer; elongated monodisperse monomer. Interacts (via C-terminal region) with RAD51; the interaction is direct. Interacts (via SIM motif) with WDR48/UAF1; WDR48/UAF1 and RAD51AP1 cooperate together to stimulate RAD51-mediated homologous recombination (HR). Interacts (via WVPP motif) with DMC1; the interaction is direct. Interacts with PALB2. Interacts with RAD52. In terms of processing, sumoylation with SUMO2/3 by NSMCE2/MMS21 promotes stabilization, possibly by preventing ubiquitination. As to expression, most abundantly expressed in testis. Also expressed in spleen, thymus and bone marrow. Not detected in heart, kidney or liver.

The protein localises to the chromosome. It localises to the nucleus. The protein resides in the telomere. Structure-specific DNA-binding protein involved in DNA repair by promoting RAD51-mediated homologous recombination. Acts by stimulating D-Loop formation by RAD51: specifically enhances joint molecule formation through its structure-specific DNA interaction and its interaction with RAD51. Binds single-stranded DNA (ssDNA), double-stranded DNA (dsDNA) and secondary DNA structures, such as D-loop structures: has a strong preference for branched-DNA structures that are obligatory intermediates during joint molecule formation. Cooperates with WDR48/UAF1 to stimulate RAD51-mediated homologous recombination: both WDR48/UAF1 and RAD51AP1 have coordinated role in DNA-binding during homologous recombination and DNA repair. WDR48/UAF1 and RAD51AP1 also have a coordinated role in DNA-binding to promote USP1-mediated deubiquitination of FANCD2. Also involved in meiosis by promoting DMC1-mediated homologous meiotic recombination. The chain is RAD51-associated protein 1 from Mus musculus (Mouse).